The following is a 137-amino-acid chain: Glutamyl-tRNA(Gln) amidotransferase subunit C, chloroplastic/mitochondrial (137 aa).

The protein belongs to the GatC family. In terms of assembly, subunit of the heterotrimeric GatCAB amidotransferase (AdT) complex, composed of A, B and C subunits.

It is found in the mitochondrion. The protein localises to the plastid. Its subcellular location is the chloroplast. It carries out the reaction L-glutamyl-tRNA(Gln) + L-glutamine + ATP + H2O = L-glutaminyl-tRNA(Gln) + L-glutamate + ADP + phosphate + H(+). In terms of biological role, allows the formation of correctly charged Gln-tRNA(Gln) through the transamidation of misacylated Glu-tRNA(Gln) in chloroplasts and mitochondria. The reaction takes place in the presence of glutamine and ATP through an activated gamma-phospho-Glu-tRNA(Gln). This is Glutamyl-tRNA(Gln) amidotransferase subunit C, chloroplastic/mitochondrial from Vitis vinifera (Grape).